We begin with the raw amino-acid sequence, 35 residues long: Photosystem II reaction center protein T (35 aa).

A helical membrane pass occupies residues 3–23; it reads ALVYTFLLVSTLGIIFFAIFF.

Belongs to the PsbT family. In terms of assembly, PSII is composed of 1 copy each of membrane proteins PsbA, PsbB, PsbC, PsbD, PsbE, PsbF, PsbH, PsbI, PsbJ, PsbK, PsbL, PsbM, PsbT, PsbY, PsbZ, Psb30/Ycf12, at least 3 peripheral proteins of the oxygen-evolving complex and a large number of cofactors. It forms dimeric complexes.

The protein resides in the plastid. Its subcellular location is the chloroplast thylakoid membrane. Found at the monomer-monomer interface of the photosystem II (PS II) dimer, plays a role in assembly and dimerization of PSII. PSII is a light-driven water plastoquinone oxidoreductase, using light energy to abstract electrons from H(2)O, generating a proton gradient subsequently used for ATP formation. The polypeptide is Photosystem II reaction center protein T (Stangeria eriopus (Natal grass cycad)).